A 1061-amino-acid polypeptide reads, in one-letter code: DNA polymerase (1061 aa).

A disordered region spans residues 773–792; that stretch reads NSEAEESDEDQGPAPFYSPP.

The protein belongs to the DNA polymerase type-B family. Heterodimer with the terminal protein; this heterodimer binds to bp 9 to 18 of the genome. Forms a complex with viral pTP, DBP and hosts NFIA and POU2F1/OCT1 for initiation of replication.

It localises to the host nucleus. It carries out the reaction DNA(n) + a 2'-deoxyribonucleoside 5'-triphosphate = DNA(n+1) + diphosphate. Eukaryotic-type DNA polymerase involved in viral genomic replication. DNA synthesis is protein primed, and acts in a strand displacement replication. Assembles in complex with viral pTP, DBP, host NFIA and host POU2F1/OCT1 on viral origin of replication. The polymerase covalently transfers dCMP onto pTP, thereby initiating complementary strand synthesis. The protein is DNA polymerase of Human adenovirus A serotype 12 (HAdV-12).